We begin with the raw amino-acid sequence, 378 residues long: MEPLCNASEPPLRPEARSSGNGDLQFLGWNVPPDQIQYIPEHWLTQLEPPASMHYMLGVFYIFLFCASTVGNGMVIWIFSTSKSLRTPSNMFVLNLAVFDLIMCLKAPIFIYNSFHRGFALGNTWCQIFASIGSYSGIGAGMTNAAIGYDRYNVITKPMNRNMTFTKAVIMNIIIWLYCTPWVVLPLTQFWDRFVPEGYLTSCSFDYLSDNFDTRLFVGTIFFFSFVCPTLMILYYYSQIVGHVFSHEKALREQAKKMNVESLRSNVDKSKETAEIRIAKAAITICFLFFVSWTPYGVMSLIGAFGDKSLLTPGATMIPACTCKLVACIDPFVYAISHPRYRLELQKRCPWLGVNEKSGEISSAQSTTTQEQQQTTAA.

At 1–53 (MEPLCNASEPPLRPEARSSGNGDLQFLGWNVPPDQIQYIPEHWLTQLEPPASM) the chain is on the extracellular side. Asn-6 carries an N-linked (GlcNAc...) asparagine glycan. The helical transmembrane segment at 54–78 (HYMLGVFYIFLFCASTVGNGMVIWI) threads the bilayer. The Cytoplasmic segment spans residues 79–90 (FSTSKSLRTPSN). A helical transmembrane segment spans residues 91–111 (MFVLNLAVFDLIMCLKAPIFI). The Extracellular portion of the chain corresponds to 112–127 (YNSFHRGFALGNTWCQ). The cysteines at positions 126 and 203 are disulfide-linked. Residues 128–148 (IFASIGSYSGIGAGMTNAAIG) form a helical membrane-spanning segment. The Cytoplasmic portion of the chain corresponds to 149-167 (YDRYNVITKPMNRNMTFTK). A helical transmembrane segment spans residues 168-192 (AVIMNIIIWLYCTPWVVLPLTQFWD). The Extracellular portion of the chain corresponds to 193 to 216 (RFVPEGYLTSCSFDYLSDNFDTRL). A helical membrane pass occupies residues 217-244 (FVGTIFFFSFVCPTLMILYYYSQIVGHV). The Cytoplasmic portion of the chain corresponds to 245-280 (FSHEKALREQAKKMNVESLRSNVDKSKETAEIRIAK). The helical transmembrane segment at 281–304 (AAITICFLFFVSWTPYGVMSLIGA) threads the bilayer. Residues 305–312 (FGDKSLLT) are Extracellular-facing. A helical transmembrane segment spans residues 313-337 (PGATMIPACTCKLVACIDPFVYAIS). N6-(retinylidene)lysine is present on Lys-324. At 338–378 (HPRYRLELQKRCPWLGVNEKSGEISSAQSTTTQEQQQTTAA) the chain is on the cytoplasmic side.

Belongs to the G-protein coupled receptor 1 family. Opsin subfamily. Post-translationally, phosphorylated on some or all of the serine and threonine residues present in the C-terminal region.

The protein resides in the membrane. Its function is as follows. Visual pigments are the light-absorbing molecules that mediate vision. They consist of an apoprotein, opsin, covalently linked to cis-retinal. This Drosophila melanogaster (Fruit fly) protein is Opsin Rh4 (Rh4).